Here is a 354-residue protein sequence, read N- to C-terminus: S-adenosylmethionine:tRNA ribosyltransferase-isomerase (354 aa).

Belongs to the QueA family. Monomer.

It localises to the cytoplasm. The enzyme catalyses 7-aminomethyl-7-carbaguanosine(34) in tRNA + S-adenosyl-L-methionine = epoxyqueuosine(34) in tRNA + adenine + L-methionine + 2 H(+). It participates in tRNA modification; tRNA-queuosine biosynthesis. Transfers and isomerizes the ribose moiety from AdoMet to the 7-aminomethyl group of 7-deazaguanine (preQ1-tRNA) to give epoxyqueuosine (oQ-tRNA). The chain is S-adenosylmethionine:tRNA ribosyltransferase-isomerase from Salmonella dublin (strain CT_02021853).